We begin with the raw amino-acid sequence, 1663 residues long: Centrosomal protein of 152 kDa (1663 aa).

The segment at 1-60 (MSIDFDSGALQTQQEDEEYDKEDYAREQELQQLLTDLPHDMLDDSLSSSPEPSYSDCSGH) is disordered. Residues 44–57 (DSLSSSPEPSYSDC) are compositionally biased toward low complexity. 7 coiled-coil regions span residues 266–516 (LQVL…ARLG), 571–664 (ELER…KHLL), 696–796 (QDKK…VTAK), 843–886 (SDCI…VEVA), 946–977 (DFTVRQKEFEEKIASMKRELELKAEESQALLK), 1014–1047 (RNKLTDTLSTAKVEFEKQKNELIAQKDREMAERL), and 1182–1288 (VQQL…KNDM). Disordered stretches follow at residues 1383–1408 (ETTQDQRSLQKPAHSHQNNNPLNQNI) and 1595–1628 (KRKDENSGRKYSNKIQEPSATGIHPESKLFSDVG). Over residues 1603–1613 (RKYSNKIQEPS) the composition is skewed to polar residues.

Belongs to the CEP152 family.

It is found in the cytoplasm. The protein resides in the cytoskeleton. Its subcellular location is the microtubule organizing center. The protein localises to the centrosome. It localises to the centriole. Its function is as follows. Necessary for centrosome duplication; the function also seems to involve cep63, cdk5rap2 and wdr62 through a stepwise assembled complex at the centrosome that recruits cdk2 required for centriole duplication. Acts as a molecular scaffold facilitating the interaction of plk4 and cpap, 2 molecules involved in centriole formation. Also plays a key role in deuterosome-mediated centriole amplification in multiciliated that can generate more than 100 centrioles. Overexpression of cep152 can drive amplification of centrioles. The protein is Centrosomal protein of 152 kDa (cep152) of Xenopus laevis (African clawed frog).